The primary structure comprises 2376 residues: Reducing polyketide synthase DEP5 (2376 aa).

Residues 47-477 enclose the Ketosynthase family 3 (KS3) domain; the sequence is LEPIAVVGMG…GTNAHTIIES (431 aa). Residues C221, H358, and H399 each act as for beta-ketoacyl synthase activity in the active site. Residues 593 to 906 are malonyl-CoA:ACP transacylase (MAT) domain; that stretch reads VFTGQGAQWA…QYLPTLVRGF (314 aa). S685 acts as the For malonyltransferase activity in catalysis. The interval 983–1121 is N-terminal hotdog fold; it reads HDVLGQLTTG…GSIAIRTSAR (139 aa). A dehydratase (DH) domain region spans residues 983–1158; it reads HDVLGQLTTG…FNYGPTFQDM (176 aa). A PKS/mFAS DH domain is found at 983–1286; the sequence is HDVLGQLTTG…CIAYEAAIPQ (304 aa). H1015 serves as the catalytic Proton acceptor; for dehydratase activity. Positions 1131–1286 are C-terminal hotdog fold; the sequence is LPQRASGRLW…CIAYEAAIPQ (156 aa). Residue D1195 is the Proton donor; for dehydratase activity of the active site. An enoyl reductase (ER) domain region spans residues 1659-1964; that stretch reads GRIQAGKVVF…DSICDNKIVI (306 aa). The interval 1988–2163 is ketoreductase (KR) domain; it reads ATYLLVGCLG…KPACAVVLPM (176 aa). Residues 2289 to 2368 enclose the Carrier domain; the sequence is DLVRDHFIAK…KFSELVCGAQ (80 aa). S2327 is modified (O-(pantetheine 4'-phosphoryl)serine).

It functions in the pathway polyketide biosynthesis. Its function is as follows. Reducing polyketide synthase; part of the gene cluster that mediates the biosynthesis of depudecin, a highly oxidized eleven-carbon linear polyketide that acts as a histone deacetylase (HDAC) inhibitor and makes a small contribution to pathogenesis. The reducing polyketide synthase DEP5 is the central enzyme in depudecin biosynthesis by yielding the backbone polyketide chain. The monooxygenases DEP2 and DEP4, as well as the uncharacterized protein DEP1, then act as tailoring enzymes to modify the intermediate polyketide chain into depudecin. The chain is Reducing polyketide synthase DEP5 from Alternaria brassicicola (Dark leaf spot agent).